The sequence spans 332 residues: L-lactate dehydrogenase A chain (332 aa).

Residues 29–57 (GMVGMASAVSILLKDLCDELALVDVMEDK) and Arg99 contribute to the NAD(+) site. The substrate site is built by Arg106, Asn138, and Arg169. Asn138 contacts NAD(+). The Proton acceptor role is filled by His193. Thr248 lines the substrate pocket.

The protein belongs to the LDH/MDH superfamily. LDH family. As to quaternary structure, homotetramer.

It is found in the cytoplasm. It catalyses the reaction (S)-lactate + NAD(+) = pyruvate + NADH + H(+). Its pathway is fermentation; pyruvate fermentation to lactate; (S)-lactate from pyruvate: step 1/1. Its function is as follows. Interconverts simultaneously and stereospecifically pyruvate and lactate with concomitant interconversion of NADH and NAD(+). This is L-lactate dehydrogenase A chain (ldha) from Sphyraena idiastes (Pelican barracuda).